We begin with the raw amino-acid sequence, 767 residues long: Protein ROLLING AND ERECT LEAF 2 (767 aa).

Disordered stretches follow at residues 1 to 20, 78 to 187, and 201 to 309; these read MGCT…CKER, PALA…SEFF, and RELE…SSTV. Composition is skewed to pro residues over residues 81 to 90 and 110 to 126; these read APTPTPPPPS and APPP…PPPV. The span at 145 to 155 shows a compositional bias: low complexity; the sequence is SDSSVASPARS. The span at 201 to 210 shows a compositional bias: basic and acidic residues; the sequence is RELEEEEKAR. The span at 221–232 shows a compositional bias: acidic residues; it reads EDEVDDDDDERE. The span at 255–264 shows a compositional bias: basic and acidic residues; the sequence is TRSEEGEMGN.

In terms of tissue distribution, highly expressed in young leaves and panicles. Expressed at low levels in roots.

Its subcellular location is the cell membrane. Involved in the regulation of leaf shape formation. May function by coordinating the expression of genes associated with leaf and bulliform cell development. The sequence is that of Protein ROLLING AND ERECT LEAF 2 from Oryza sativa subsp. japonica (Rice).